Consider the following 190-residue polypeptide: Protein SYM1 (190 aa).

The next 4 membrane-spanning stretches (helical) occupy residues 16–36, 54–74, 91–111, and 131–151; these read PVLG…VIAQ, IVTW…RTLE, LDQF…MTFM, and LQAN…LVPL.

Belongs to the peroxisomal membrane protein PXMP2/4 family.

The protein resides in the mitochondrion inner membrane. May be involved in cellular response to stress. Required to maintain mitochondrial DNA (mtDNA) integrity and stability. The sequence is that of Protein SYM1 (SYM1) from Cryptococcus neoformans var. neoformans serotype D (strain B-3501A) (Filobasidiella neoformans).